The following is a 554-amino-acid chain: Dihydroxy-acid dehydratase (554 aa).

Residue aspartate 78 participates in Mg(2+) binding. Position 119 (cysteine 119) interacts with [2Fe-2S] cluster. Aspartate 120 and lysine 121 together coordinate Mg(2+). Lysine 121 is modified (N6-carboxylysine). Position 192 (cysteine 192) interacts with [2Fe-2S] cluster. Glutamate 443 lines the Mg(2+) pocket. Serine 469 acts as the Proton acceptor in catalysis.

This sequence belongs to the IlvD/Edd family. Homodimer. [2Fe-2S] cluster serves as cofactor. The cofactor is Mg(2+).

It catalyses the reaction (2R)-2,3-dihydroxy-3-methylbutanoate = 3-methyl-2-oxobutanoate + H2O. It carries out the reaction (2R,3R)-2,3-dihydroxy-3-methylpentanoate = (S)-3-methyl-2-oxopentanoate + H2O. Its pathway is amino-acid biosynthesis; L-isoleucine biosynthesis; L-isoleucine from 2-oxobutanoate: step 3/4. It participates in amino-acid biosynthesis; L-valine biosynthesis; L-valine from pyruvate: step 3/4. Functionally, functions in the biosynthesis of branched-chain amino acids. Catalyzes the dehydration of (2R,3R)-2,3-dihydroxy-3-methylpentanoate (2,3-dihydroxy-3-methylvalerate) into 2-oxo-3-methylpentanoate (2-oxo-3-methylvalerate) and of (2R)-2,3-dihydroxy-3-methylbutanoate (2,3-dihydroxyisovalerate) into 2-oxo-3-methylbutanoate (2-oxoisovalerate), the penultimate precursor to L-isoleucine and L-valine, respectively. The sequence is that of Dihydroxy-acid dehydratase from Clostridium novyi (strain NT).